The primary structure comprises 527 residues: Bifunctional methyltransferase (527 aa).

The tract at residues 1 to 309 (MQYSIKQVLS…GHSRVILFSP (309 aa)) is hemK. The segment at 1–311 (MQYSIKQVLS…SRVILFSPIN (311 aa)) is RF MTase. Residues 149-153 (GTGSG), Asp172, Trp201, Asn216, Glu356, Glu381, Asn408, and Asp430 each bind S-adenosyl-L-methionine. Residue 216-219 (NPPY) participates in substrate binding. A tRNA (guanine-N(7)-)-methyltransferase region spans residues 310 to 527 (INLNRSYARR…IILQHVSGDH (218 aa)). The segment at 314–527 (RSYARRIGKS…IILQHVSGDH (214 aa)) is tRNA MTase. The active site involves Asp430. Substrate contacts are provided by Lys434 and Asp466.

It in the C-terminal section; belongs to the class I-like SAM-binding methyltransferase superfamily. TrmB family. In the N-terminal section; belongs to the protein N5-glutamine methyltransferase family. PrmC subfamily.

It catalyses the reaction L-glutaminyl-[peptide chain release factor] + S-adenosyl-L-methionine = N(5)-methyl-L-glutaminyl-[peptide chain release factor] + S-adenosyl-L-homocysteine + H(+). The catalysed reaction is guanosine(46) in tRNA + S-adenosyl-L-methionine = N(7)-methylguanosine(46) in tRNA + S-adenosyl-L-homocysteine. Functionally, methylates the class 1 translation termination release factors RF1/PrfA and RF2/PrfB on the glutamine residue of the universally conserved GGQ motif. Its function is as follows. Catalyzes the formation of N(7)-methylguanine at position 46 (m7G46) in tRNA. The chain is Bifunctional methyltransferase (prmC/trmB) from Rickettsia felis (strain ATCC VR-1525 / URRWXCal2) (Rickettsia azadi).